Here is a 179-residue protein sequence, read N- to C-terminus: MAVFKTTLWRLISGTLGIICLSLMATLGILLKNSFTKLSVEPAYTPGPNIELQKDSDCCSCHEKWVGYRCNCYFISSEEKTWNESRHFCASQKSSLLQLQNRDELDFMSSSQHFYWIGLSYSEEHTAWLWENGSALSQYLFPSFETFKPKNCIAYNSKGNALDESCETKNRYICKQQLI.

Residues 1 to 10 are Cytoplasmic-facing; sequence MAVFKTTLWR. The helical; Signal-anchor for type II membrane protein transmembrane segment at 11 to 31 threads the bilayer; sequence LISGTLGIICLSLMATLGILL. Residues 32-179 are Extracellular-facing; sequence KNSFTKLSVE…NRYICKQQLI (148 aa). 2 disulfide bridges follow: cysteine 58–cysteine 70 and cysteine 61–cysteine 72. In terms of domain architecture, C-type lectin spans 68–175; the sequence is YRCNCYFISS…CETKNRYICK (108 aa). Residues asparagine 83 and asparagine 132 are each glycosylated (N-linked (GlcNAc...) asparagine). Cystine bridges form between cysteine 89-cysteine 174 and cysteine 152-cysteine 166.

Can form disulfide-bonded heterodimer with NKG2 family members KLRC1 and KLRC2. KLRD1-KLRC1 heterodimer interacts with peptide-bound MHC-E-B2M heterotrimeric complex. KLRD1 plays a prominent role in directly interacting with MHC-E. KLRD1-KLRC1 interacts with much higher affinity with peptide-bound MHC-E-B2M than KLRD1-KLRC2. Interacts with the adapter protein TYROBP/DAP12; this interaction is required for cell surface expression and cell activation. In terms of tissue distribution, natural killer cells.

The protein resides in the cell membrane. Immune receptor involved in self-nonself discrimination. In complex with KLRC1 or KLRC2 on cytotoxic and regulatory lymphocyte subsets, recognizes non-classical major histocompatibility (MHC) class Ib molecule MHC-E loaded with self-peptides derived from the signal sequence of classical MHC class Ia and non-classical MHC class Ib molecules. Enables cytotoxic cells to monitor the expression of MHC class I molecules in healthy cells and to tolerate self. Primarily functions as a ligand binding subunit as it lacks the capacity to signal. In terms of biological role, KLRD1-KLRC1 acts as an immune inhibitory receptor. Key inhibitory receptor on natural killer (NK) cells that regulates their activation and effector functions. Dominantly counteracts T cell receptor signaling on a subset of memory/effector CD8-positive T cells as part of an antigen-driven response to avoid autoimmunity. On intraepithelial CD8-positive gamma-delta regulatory T cells triggers TGFB1 secretion, which in turn limits the cytotoxic programming of intraepithelial CD8-positive alpha-beta T cells, distinguishing harmless from pathogenic antigens. In MHC-E-rich tumor microenvironment, acts as an immune inhibitory checkpoint and may contribute to progressive loss of effector functions of NK cells and tumor-specific T cells, a state known as cell exhaustion. Upon MHC-E-peptide binding, transmits intracellular signals through KLRC1 immunoreceptor tyrosine-based inhibition motifs (ITIMs) by recruiting INPP5D/SHIP-1 and INPPL1/SHIP-2 tyrosine phosphatases to ITIMs, and ultimately opposing signals transmitted by activating receptors through dephosphorylation of proximal signaling molecules. Functionally, KLRD1-KLRC2 acts as an immune activating receptor. On cytotoxic lymphocyte subsets recognizes MHC-E loaded with signal sequence-derived peptides from non-classical MHC class Ib MHC-G molecules, likely playing a role in the generation and effector functions of adaptive NK cells and in maternal-fetal tolerance during pregnancy. Regulates the effector functions of terminally differentiated cytotoxic lymphocyte subsets, and in particular may play a role in adaptive NK cell response to viral infection. Upon MHC-E-peptide binding, transmits intracellular signals via the adapter protein TYROBP/DAP12, triggering the phosphorylation of proximal signaling molecules and cell activation. This chain is Natural killer cells antigen CD94 (KLRD1), found in Macaca mulatta (Rhesus macaque).